Reading from the N-terminus, the 225-residue chain is Protein GrpE (225 aa).

The segment covering 1-15 (MSGDASTPEQDQNVV) has biased composition (polar residues). Disordered regions lie at residues 1–48 (MSGD…DRMQ) and 198–225 (VSMGPGPSDPGSAPAEAAAAPDQTAEEA). Residues 201–225 (GPGPSDPGSAPAEAAAAPDQTAEEA) are compositionally biased toward low complexity.

Belongs to the GrpE family. As to quaternary structure, homodimer.

It is found in the cytoplasm. Its function is as follows. Participates actively in the response to hyperosmotic and heat shock by preventing the aggregation of stress-denatured proteins, in association with DnaK and GrpE. It is the nucleotide exchange factor for DnaK and may function as a thermosensor. Unfolded proteins bind initially to DnaJ; upon interaction with the DnaJ-bound protein, DnaK hydrolyzes its bound ATP, resulting in the formation of a stable complex. GrpE releases ADP from DnaK; ATP binding to DnaK triggers the release of the substrate protein, thus completing the reaction cycle. Several rounds of ATP-dependent interactions between DnaJ, DnaK and GrpE are required for fully efficient folding. In Synechococcus sp. (strain CC9605), this protein is Protein GrpE.